Here is a 347-residue protein sequence, read N- to C-terminus: Ileal sodium/bile acid cotransporter (347 aa).

Residues 1–29 lie on the Extracellular side of the membrane; it reads MSNLTVGCLANATVCEGASCVAPESNFNA. Asn-3 and Asn-11 each carry an N-linked (GlcNAc...) asparagine glycan. A helical transmembrane segment spans residues 30-50; it reads ILSVVLSTVLTILLALVMFSM. At 51-83 the chain is on the cytoplasmic side; that stretch reads GCNVEIKKFLGHIRRPWGIFIGFLCQFGIMPLT. A helical membrane pass occupies residues 84 to 104; the sequence is GFVLAVAFGIMPIQAVVVLIM. Residues 105-127 lie on the Extracellular side of the membrane; it reads GCCPGGTASNILAYWVDGDMDLS. A helical membrane pass occupies residues 128–148; the sequence is VSMTTCSTLLALGMMPLCLYV. Residues 149 to 158 are Cytoplasmic-facing; the sequence is YTKMWVDSGT. A helical transmembrane segment spans residues 159–179; it reads IVIPYDNIGTSLVALVVPVSI. Residues 180-196 lie on the Extracellular side of the membrane; the sequence is GMFVNHKWPQKAKIILK. A helical membrane pass occupies residues 197-217; the sequence is VGSIAGAVLIVLIAVVGGILY. The Cytoplasmic segment spans residues 218–225; it reads QSAWIIEP. The helical transmembrane segment at 226–246 threads the bilayer; that stretch reads KLWIIGTIFPMAGYSLGFFLA. The Extracellular segment spans residues 247–289; it reads RIAGQPWYRCRTVALETGMQNTQLCSTIVQLSFSPEDLTYVFT. A helical membrane pass occupies residues 290–310; sequence FPLIYSIFQIAFAAIFLGIYV. Over 311–347 the chain is Cytoplasmic; sequence AYRKCHGKNDAEFPDIKDTKTEPESSFHQMNGGFQPE. The span at 323-335 shows a compositional bias: basic and acidic residues; sequence FPDIKDTKTEPES. The tract at residues 323-347 is disordered; it reads FPDIKDTKTEPESSFHQMNGGFQPE. Ser-336 bears the Phosphoserine mark.

Belongs to the bile acid:sodium symporter (BASS) (TC 2.A.28) family. Monomer and homodimer.

It is found in the membrane. It carries out the reaction taurocholate(out) + 2 Na(+)(out) = taurocholate(in) + 2 Na(+)(in). The catalysed reaction is cholate(out) + 2 Na(+)(out) = cholate(in) + 2 Na(+)(in). The enzyme catalyses taurochenodeoxycholate(out) + 2 Na(+)(out) = taurochenodeoxycholate(in) + 2 Na(+)(in). It catalyses the reaction tauroursodeoxycholate(out) + 2 Na(+)(out) = tauroursodeoxycholate(in) + 2 Na(+)(in). It carries out the reaction glycocholate(out) + 2 Na(+)(out) = glycocholate(in) + 2 Na(+)(in). The catalysed reaction is tauronorcholate(out) + 2 Na(+)(out) = tauronorcholate(in) + 2 Na(+)(in). The enzyme catalyses tauroallocholate(out) + 2 Na(+)(out) = tauroallocholate(in) + 2 Na(+)(in). It catalyses the reaction taurodeoxycholate(out) + 2 Na(+)(out) = taurodeoxycholate(in) + 2 Na(+)(in). It carries out the reaction tauro-beta-muricholate(out) + 2 Na(+)(out) = tauro-beta-muricholate(in) + 2 Na(+)(in). Plays a critical role in the sodium-dependent reabsorption of bile acids from the lumen of the small intestine. Transports various bile acids, unconjugated or conjugated, such as cholate and taurocholate. Also responsible for bile acid transport in the renal proximal tubules, a salvage mechanism that helps conserve bile acids. Works collaboratively with the Na(+)-taurocholate cotransporting polypeptide (NTCP), the organic solute transporter (OST), and the bile salt export pump (BSEP), to ensure efficacious biological recycling of bile acids during enterohepatic circulation. This chain is Ileal sodium/bile acid cotransporter (SLC10A2), found in Oryctolagus cuniculus (Rabbit).